A 252-amino-acid chain; its full sequence is MTQSPSLAAAAPIVVIPARMASTRLPGKPLADIHGVPMIVQVWRRAMEAGIGPVLVAAAEDEIAQAVRAAGGNAVLTDPDLPSGSDRVWQAVERFDPAGRHAVVVNVQGDLPTLDPGLIIRAVETVLAEPDIALSTLICEITREEERTNPNVVKAVVGLAEGQTRGRALYFSRATVPHGPGPHYHHIGLYAYRRTTLGAFVSLPPGVLERREKLEQLRALENHMRIEAALVDTVPLGVDTAEDLERARALLG.

It belongs to the KdsB family.

The protein localises to the cytoplasm. The catalysed reaction is 3-deoxy-alpha-D-manno-oct-2-ulosonate + CTP = CMP-3-deoxy-beta-D-manno-octulosonate + diphosphate. Its pathway is nucleotide-sugar biosynthesis; CMP-3-deoxy-D-manno-octulosonate biosynthesis; CMP-3-deoxy-D-manno-octulosonate from 3-deoxy-D-manno-octulosonate and CTP: step 1/1. It functions in the pathway bacterial outer membrane biogenesis; lipopolysaccharide biosynthesis. In terms of biological role, activates KDO (a required 8-carbon sugar) for incorporation into bacterial lipopolysaccharide in Gram-negative bacteria. The chain is 3-deoxy-manno-octulosonate cytidylyltransferase from Rhodospirillum rubrum (strain ATCC 11170 / ATH 1.1.1 / DSM 467 / LMG 4362 / NCIMB 8255 / S1).